The primary structure comprises 340 residues: Trimethylamine N-oxide transport system ATP-binding protein TmoW (340 aa).

The ABC transporter domain occupies 32–268 (GRSFDDIRAD…PTTGYVAKFT (237 aa)). 64-71 (GLSGSGKS) contacts ATP.

The protein belongs to the ABC transporter superfamily. The complex is probably composed of two ATP-binding proteins (TmoW), two transmembrane proteins (TmoV) and a solute-binding protein (TmoX).

The protein resides in the cell inner membrane. The catalysed reaction is a quaternary ammonium(out) + ATP + H2O = a quaternary ammonium(in) + ADP + phosphate + H(+). Part of the ABC transporter complex TmoXWV involved in trimethylamine N-oxide (TMAO) import. Responsible for energy coupling to the transport system. Is specific for TMAO and essential for TMAO metabolism. This chain is Trimethylamine N-oxide transport system ATP-binding protein TmoW, found in Ruegeria pomeroyi (strain ATCC 700808 / DSM 15171 / DSS-3) (Silicibacter pomeroyi).